A 229-amino-acid polypeptide reads, in one-letter code: 7-cyano-7-deazaguanine synthase (229 aa).

An ATP-binding site is contributed by 9–19; sequence YSGGLDSTTCM. Zn(2+) contacts are provided by C189, C199, C202, and C205.

This sequence belongs to the QueC family. Requires Zn(2+) as cofactor.

It carries out the reaction 7-carboxy-7-deazaguanine + NH4(+) + ATP = 7-cyano-7-deazaguanine + ADP + phosphate + H2O + H(+). It participates in purine metabolism; 7-cyano-7-deazaguanine biosynthesis. Catalyzes the ATP-dependent conversion of 7-carboxy-7-deazaguanine (CDG) to 7-cyano-7-deazaguanine (preQ(0)). The chain is 7-cyano-7-deazaguanine synthase from Geotalea daltonii (strain DSM 22248 / JCM 15807 / FRC-32) (Geobacter daltonii).